The primary structure comprises 441 residues: MQVSVETTSPIERVLTISVPAARVDEKVNSEVAKTAKTIRIDGFRKGKVPVSVVKKRYGQGIRLDAVEQIMRDAYVEAIQKESIQPAGMPSIEPKNFAEGADLEFVVKIEVYPEVTLADNSAIKVDRVVSDVTEADVDTMLETLRKQNAEWSAVERESADGDQVTIDFVGYLGDEAFDGGAAEGHKLVLGSNTMIPGFESGILGAKAGEERTISVTFPEDYQAENLKGKEATFKITVSEVAEQILPELNDAFVEKFGLEEATVAALRAEVRKNMERELNQAIKSKLKNALFEGLSSINEVEVPSALVDQEVDALRKQAAQQFGGQGFDASQLPAELFQEEAKKRAKLGLLISEVIKKDDLKVDDDRVRAFLEDMAQAYQEPQQVIDFYLKNKEQLAQVQSAVLEEQVVDKLLESAQVTEVTLGYEDAIKPNAQAEEAGEEA.

A PPIase FKBP-type domain is found at 161-246 (GDQVTIDFVG…VSEVAEQILP (86 aa)).

Belongs to the FKBP-type PPIase family. Tig subfamily.

It localises to the cytoplasm. The enzyme catalyses [protein]-peptidylproline (omega=180) = [protein]-peptidylproline (omega=0). Functionally, involved in protein export. Acts as a chaperone by maintaining the newly synthesized protein in an open conformation. Functions as a peptidyl-prolyl cis-trans isomerase. The chain is Trigger factor from Marinomonas sp. (strain MWYL1).